The primary structure comprises 648 residues: Copper methylamine oxidase (648 aa).

Positions M1–A9 are excised as a propeptide. A substrate-binding site is contributed by A299–M310. D301 serves as the catalytic Proton acceptor. A disulfide bond links C320 and C346. A substrate-binding site is contributed by V382–Y387. Y385 acts as the Schiff-base intermediate with substrate; via topaquinone in catalysis. Residue Y385 is modified to 2',4',5'-topaquinone. Residues H436 and H438 each contribute to the Cu cation site. Residues D445, F446, and D584 each contribute to the Mn(2+) site. A Cu cation-binding site is contributed by H595. The interval P629 to K648 is disordered.

Belongs to the copper/topaquinone oxidase family. Homodimer. Cu cation is required as a cofactor. Zn(2+) serves as cofactor. It depends on L-topaquinone as a cofactor. The cofactor is Mn(2+). Topaquinone (TPQ) is generated by copper-dependent autoxidation of a specific tyrosyl residue.

The enzyme catalyses a primary methyl amine + O2 + H2O = an aldehyde + H2O2 + NH4(+). The sequence is that of Copper methylamine oxidase (maoII) from Arthrobacter sp. (strain P1).